Reading from the N-terminus, the 458-residue chain is Argininosuccinate lyase (458 aa).

Belongs to the lyase 1 family. Argininosuccinate lyase subfamily.

It localises to the cytoplasm. It catalyses the reaction 2-(N(omega)-L-arginino)succinate = fumarate + L-arginine. It functions in the pathway amino-acid biosynthesis; L-arginine biosynthesis; L-arginine from L-ornithine and carbamoyl phosphate: step 3/3. In Actinobacillus pleuropneumoniae serotype 3 (strain JL03), this protein is Argininosuccinate lyase.